The following is a 951-amino-acid chain: WD repeat-containing and planar cell polarity effector protein fritz (951 aa).

2 WD repeats span residues 304 to 343 and 345 to 384; these read PMGA…TKYA and QIEI…IGHQ. Polar residues-rich tracts occupy residues 709-720, 757-771, and 818-828; these read TLKSNSSLQQAP, IPDQ…STMP, and SILSNPANPAP. Disordered regions lie at residues 709 to 776, 816 to 883, and 903 to 951; these read TLKS…SPPP, TASI…AARH, and EYLK…FGVV. Residues 930–942 are compositionally biased toward low complexity; that stretch reads SSKGGNSSSSSSS.

Belongs to the WD repeat fritz family.

It localises to the cell membrane. Its subcellular location is the cytoplasm. It is found in the cytoskeleton. The protein resides in the cilium axoneme. Probable effector of the planar cell polarity signaling pathway which regulates the septin cytoskeleton in both ciliogenesis and collective cell movements. Functions cell autonomously to regulate wing cell hair polarity and number. The sequence is that of WD repeat-containing and planar cell polarity effector protein fritz (frtz) from Drosophila melanogaster (Fruit fly).